We begin with the raw amino-acid sequence, 413 residues long: DnaJ protein homolog (413 aa).

The region spanning Asn-10–Asp-75 is the J domain. The CR-type zinc-finger motif lies at Gly-133–Lys-217. CXXCXGXG motif repeat units follow at residues Cys-146–Gly-153, Cys-162–Gly-169, Cys-189–Gly-196, and Cys-205–Lys-212. A disordered region spans residues Arg-387–Gln-413. Cysteine methyl ester is present on Cys-410. A lipid anchor (S-farnesyl cysteine) is attached at Cys-410. The propeptide at Ala-411–Gln-413 is removed in mature form.

In terms of tissue distribution, expressed in seedlings in all tissues, but exceedingly high levels in hypocotyledons and roots.

The protein localises to the cell membrane. Its function is as follows. Plays a continuous role in plant development probably in the structural organization of compartments. This is DnaJ protein homolog (DNAJ1) from Cucumis sativus (Cucumber).